The chain runs to 647 residues: tRNA uridine 5-carboxymethylaminomethyl modification enzyme MnmG (647 aa).

Residues 22–27, Val134, and Ser189 contribute to the FAD site; that span reads GAGHAG. Residue 283 to 297 participates in NAD(+) binding; it reads GARYCPSIEDKIMRF. Gln380 provides a ligand contact to FAD.

Belongs to the MnmG family. As to quaternary structure, homodimer. Heterotetramer of two MnmE and two MnmG subunits. FAD serves as cofactor.

The protein resides in the cytoplasm. NAD-binding protein involved in the addition of a carboxymethylaminomethyl (cmnm) group at the wobble position (U34) of certain tRNAs, forming tRNA-cmnm(5)s(2)U34. In Desulfotalea psychrophila (strain LSv54 / DSM 12343), this protein is tRNA uridine 5-carboxymethylaminomethyl modification enzyme MnmG.